Reading from the N-terminus, the 117-residue chain is Large ribosomal subunit protein bL20 (117 aa).

The protein belongs to the bacterial ribosomal protein bL20 family.

In terms of biological role, binds directly to 23S ribosomal RNA and is necessary for the in vitro assembly process of the 50S ribosomal subunit. It is not involved in the protein synthesizing functions of that subunit. The chain is Large ribosomal subunit protein bL20 (rplT) from Synechocystis sp. (strain ATCC 27184 / PCC 6803 / Kazusa).